We begin with the raw amino-acid sequence, 367 residues long: GTP cyclohydrolase FolE2 (367 aa).

This sequence belongs to the GTP cyclohydrolase IV family.

The catalysed reaction is GTP + H2O = 7,8-dihydroneopterin 3'-triphosphate + formate + H(+). It functions in the pathway cofactor biosynthesis; 7,8-dihydroneopterin triphosphate biosynthesis; 7,8-dihydroneopterin triphosphate from GTP: step 1/1. Functionally, converts GTP to 7,8-dihydroneopterin triphosphate. The chain is GTP cyclohydrolase FolE2 from Ruegeria sp. (strain TM1040) (Silicibacter sp.).